The chain runs to 83 residues: Sec-independent protein translocase protein TatA (83 aa).

The helical transmembrane segment at 1–21 (MGGLSLPHLIVLALVVLILFG) threads the bilayer. Residues 34-83 (KGIKSFKQGMNDEDSKPVTPPPAQIPPASLQQTPPPAQPAPQPTSTDQAQ) form a disordered region. The segment covering 66 to 75 (TPPPAQPAPQ) has biased composition (pro residues).

Belongs to the TatA/E family. The Tat system comprises two distinct complexes: a TatABC complex, containing multiple copies of TatA, TatB and TatC subunits, and a separate TatA complex, containing only TatA subunits. Substrates initially bind to the TatABC complex, which probably triggers association of the separate TatA complex to form the active translocon.

Its subcellular location is the cell inner membrane. In terms of biological role, part of the twin-arginine translocation (Tat) system that transports large folded proteins containing a characteristic twin-arginine motif in their signal peptide across membranes. TatA could form the protein-conducting channel of the Tat system. The chain is Sec-independent protein translocase protein TatA from Novosphingobium aromaticivorans (strain ATCC 700278 / DSM 12444 / CCUG 56034 / CIP 105152 / NBRC 16084 / F199).